A 260-amino-acid polypeptide reads, in one-letter code: Uroplakin-1b (260 aa).

Residues M1–Q12 lie on the Cytoplasmic side of the membrane. Residues G13–S38 form a helical membrane-spanning segment. At D39–W60 the chain is on the extracellular side. The helical transmembrane segment at I61 to M81 threads the bilayer. Over K82–K86 the chain is Cytoplasmic. A helical transmembrane segment spans residues I87–I107. Topologically, residues T108–H229 are extracellular. The helical transmembrane segment at A230–G250 threads the bilayer. Residues T251 to Y260 are Cytoplasmic-facing.

Belongs to the tetraspanin (TM4SF) family. In terms of assembly, heterodimer with uroplakin-3A (UPK3A) or uroplakin-3B (UPK3B).

It is found in the membrane. In terms of biological role, component of the asymmetric unit membrane (AUM); a highly specialized biomembrane elaborated by terminally differentiated urothelial cells. The chain is Uroplakin-1b (UPK1B) from Neovison vison (American mink).